Here is a 64-residue protein sequence, read N- to C-terminus: Large ribosomal subunit protein bL28C (64 aa).

It belongs to the bacterial ribosomal protein bL28 family.

This is Large ribosomal subunit protein bL28C from Mycobacterium tuberculosis (strain ATCC 25618 / H37Rv).